The following is a 132-amino-acid chain: Histone H2A-alpha (132 aa).

Residue serine 2 is modified to N-acetylserine. An N6-acetyllysine mark is found at lysine 5 and lysine 9. Glutamine 106 is subject to N5-methylglutamine. Phosphoserine is present on serine 129. A [ST]-Q motif motif is present at residues 129 to 130 (SQ).

Belongs to the histone H2A family. In terms of assembly, the nucleosome is a histone octamer containing two molecules each of H2A, H2B, H3 and H4 assembled in one H3-H4 heterotetramer and two H2A-H2B heterodimers. The octamer wraps approximately 147 bp of DNA. Interacts with mdb1 (via BRCT domain) in vitro; this interaction requires phosphorylation of this protein at the S/T-Q motif. Phosphorylated to form H2AS128ph (gamma-H2A) in response to DNA double-strand breaks (DSBs) generated by exogenous genotoxic agents and by stalled replication forks. Phosphorylation is dependent on the DNA damage checkpoint kinases rad3/ATR and tel1/ATM, spreads on either side of a detected DSB site and may mark the surrounding chromatin for recruitment of proteins required for DNA damage signaling and repair. Gamma-H2A is required for recruiting crb2, a modulator of DNA damage checkpoint signaling, to DSB sites. Gamma-H2A is removed from the DNA prior to the strand invasion-primer extension step of the repair process and subsequently dephosphorylated. Dephosphorylation is necessary for efficient recovery from the DNA damage checkpoint. Post-translationally, acetylated by esa1 to form H2AK4ac and H2AK7ac.

The protein resides in the nucleus. It localises to the chromosome. Its function is as follows. Core component of nucleosome which plays a central role in DNA double strand break (DSB) repair. Nucleosomes wrap and compact DNA into chromatin, limiting DNA accessibility to the cellular machineries which require DNA as a template. Histones thereby play a central role in transcription regulation, DNA repair, DNA replication and chromosomal stability. DNA accessibility is regulated via a complex set of post-translational modifications of histones, also called histone code, and nucleosome remodeling. This chain is Histone H2A-alpha (hta1), found in Schizosaccharomyces pombe (strain 972 / ATCC 24843) (Fission yeast).